The following is an 891-amino-acid chain: MGRQFICSIYLPYTINFHLDELEGNHESHPAITHQEKVTQTHRDSVKIDDILTRLSISKSESGQATPVLTPQLEGMNDYFSLGPSKRTGGSMTPGLGAMSPIPGSGRSSPLYTQPRSRATSPSRVRQADRFAAPGIGAGALPIRRKRRDSLAKSVALFESARWSVERGVVGNSGLFHAVDAAVRDHGLQNPLWVGLLGMPTESLSEKTKNAISGALLVKHQSLVVYTSDSNFEGHYNHYCRKILWPSLHYQHNEIFSFFHEESNWDDYVAVNRAFADALIKNYKTGDTIWVNDYHLLLVPNMVRERIPSAIIGLFIHVSFPSSEVFRCFARRKELLQGMLGSNLIGFQTEEYKRHFLQSCSRVLYAESTFDRILLDDRYIDVYAHPIGADPVLVDKWLENPETLEVKEVLEKRYANLNIFVGCDKMDPIRGIREKLLAFEQFLYDNPEYQKNTILIQTSTFTEEQKEYGVAISDIVTRINSAFGDFSLDHLPVTILSSDLSYPQYLALLSVADAFIVTSLREGMSLTCHEFILTQRQKKSPLIVSEFIGCASMFSNGAFIVNPWSTLELSLSMKKALTLSTNERNQRYSNCLDVVLTHSASNWVTGFETKLKKSWTSQQKRDFSRLPRFTLNFIGNRYDHAKKRLLILNFDGNAVTWEGRHEFVDFHYGYMVSILSKLIADDRNIVYIASCLEEDELESLFMHVPGVGLIAENGCYVLPHYAENVHQSWIRLYKKQQMDWREPLHDIIQYYSERTPGSSLIDHGFAMEFNYVKAENRENGLRSAGELASSINETQHGCRAVPLDGRVLCEPTTISKATAANYIMTHLIKNPEELDLILVAGNNRTDESVFAWANKSKVSSFTVSMGVGNTEAKAYTDGIPSFFNVLNSLCA.

Phosphothreonine is present on Thr88. The disordered stretch occupies residues 88 to 126; that stretch reads TGGSMTPGLGAMSPIPGSGRSSPLYTQPRSRATSPSRVR. Residues 106-124 are compositionally biased toward polar residues; it reads GRSSPLYTQPRSRATSPSR. Ser108 and Ser109 each carry phosphoserine. Residues 132 to 613 are glycosyltransferase; the sequence is AAPGIGAGAL…VTGFETKLKK (482 aa).

In the N-terminal section; belongs to the glycosyltransferase 20 family.

The enzyme catalyses D-glucose 6-phosphate + UDP-alpha-D-glucose = alpha,alpha-trehalose 6-phosphate + UDP + H(+). This Schizosaccharomyces pombe (strain 972 / ATCC 24843) (Fission yeast) protein is Putative alpha,alpha-trehalose-phosphate synthase [UDP-forming] 100 kDa subunit.